A 276-amino-acid polypeptide reads, in one-letter code: S-adenosylmethionine decarboxylase proenzyme (276 aa).

S124 acts as the Schiff-base intermediate with substrate; via pyruvic acid in catalysis. Residue S124 is modified to Pyruvic acid (Ser); by autocatalysis. H129 acts as the Proton acceptor; for processing activity in catalysis. Catalysis depends on C152, which acts as the Proton donor; for catalytic activity.

This sequence belongs to the prokaryotic AdoMetDC family. Type 2 subfamily. In terms of assembly, heterooctamer of four alpha and four beta chains arranged as a tetramer of alpha/beta heterodimers. Pyruvate serves as cofactor. Is synthesized initially as an inactive proenzyme. Formation of the active enzyme involves a self-maturation process in which the active site pyruvoyl group is generated from an internal serine residue via an autocatalytic post-translational modification. Two non-identical subunits are generated from the proenzyme in this reaction, and the pyruvate is formed at the N-terminus of the alpha chain, which is derived from the carboxyl end of the proenzyme. The post-translation cleavage follows an unusual pathway, termed non-hydrolytic serinolysis, in which the side chain hydroxyl group of the serine supplies its oxygen atom to form the C-terminus of the beta chain, while the remainder of the serine residue undergoes an oxidative deamination to produce ammonia and the pyruvoyl group blocking the N-terminus of the alpha chain.

The catalysed reaction is S-adenosyl-L-methionine + H(+) = S-adenosyl 3-(methylsulfanyl)propylamine + CO2. The protein operates within amine and polyamine biosynthesis; S-adenosylmethioninamine biosynthesis; S-adenosylmethioninamine from S-adenosyl-L-methionine: step 1/1. Functionally, catalyzes the decarboxylation of S-adenosylmethionine to S-adenosylmethioninamine (dcAdoMet), the propylamine donor required for the synthesis of the polyamines spermine and spermidine from the diamine putrescine. The sequence is that of S-adenosylmethionine decarboxylase proenzyme from Desulfitobacterium hafniense (strain Y51).